A 187-amino-acid polypeptide reads, in one-letter code: MTTTEKVQPRLKERYRNEIRDSLQQQFGYANVMQIPTVTKVVVNMGIGEAARDAKLINGAVNDLALITGQRPEIRRARKSIAQFKLREGMPIGARVTLRGDRMWEFLDRLTSIALPRIRDFRGLSPKQFDGVGNYTFGLAEQSVFHEIDVDKIDRVRGMDINVVTSATTDDEGRALLRALGFPFKEN.

The protein belongs to the universal ribosomal protein uL5 family. Part of the 50S ribosomal subunit; part of the 5S rRNA/L5/L18/L25 subcomplex. Contacts the 5S rRNA and the P site tRNA. Forms a bridge to the 30S subunit in the 70S ribosome.

Its function is as follows. This is one of the proteins that bind and probably mediate the attachment of the 5S RNA into the large ribosomal subunit, where it forms part of the central protuberance. In the 70S ribosome it contacts protein S13 of the 30S subunit (bridge B1b), connecting the 2 subunits; this bridge is implicated in subunit movement. Contacts the P site tRNA; the 5S rRNA and some of its associated proteins might help stabilize positioning of ribosome-bound tRNAs. In Mycobacterium avium (strain 104), this protein is Large ribosomal subunit protein uL5.